Here is a 368-residue protein sequence, read N- to C-terminus: MTAIIELNNLSVQFHQKGRLVTAVKNATLHIEKGDIYGVIGYSGAGKSTLVRTINLLQKPTEGQIVINGEKIFDSANPVKFTGAKLREFRQKIGMIFQHFNLLSEKTVFNNVAFALQHSQIEDKNGKKRYLTKKEKNDKVTELLKLVDLADLSDKYPAQLSGGQKQRVAIARALTNDPEILISDEGTSALDPKTTNQILDLLKSLHEKLGITVVLITHEMQVVKEIANKVAVMQNGEIIEQNSLIDIFAQPKEALTKQFIETTSSVNRFIASLSKTELLAQLADDEELIHLDYSGSELEDPVVSDITKKFDVTTNIFYGNVELLQGQPFGSLVLTLKGSSEHRAAAKAYFVERHLKFEVLGKIERTVD.

The ABC transporter domain maps to 5 to 260; the sequence is IELNNLSVQF…PKEALTKQFI (256 aa). 41–48 contributes to the ATP binding site; it reads GYSGAGKS.

Belongs to the ABC transporter superfamily. Methionine importer (TC 3.A.1.24) family. As to quaternary structure, the complex is composed of two ATP-binding proteins (MetN), two transmembrane proteins (MetI) and a solute-binding protein (MetQ).

The protein localises to the cell membrane. It carries out the reaction L-methionine(out) + ATP + H2O = L-methionine(in) + ADP + phosphate + H(+). The catalysed reaction is D-methionine(out) + ATP + H2O = D-methionine(in) + ADP + phosphate + H(+). In terms of biological role, part of the ABC transporter complex MetNIQ involved in methionine import. Responsible for energy coupling to the transport system. This Lactococcus lactis subsp. cremoris (strain SK11) protein is Methionine import ATP-binding protein MetN.